The following is a 340-amino-acid chain: Latency-related protein 1 (340 aa).

Disordered regions lie at residues A13–Q96 and R254–P340. 2 consecutive repeat copies span residues P27–P43 and P59–P75. The 2 X 17 AA repeats stretch occupies residues P27–P75. Pro residues predominate over residues H35–R73. Over residues A287–G307 the composition is skewed to gly residues. The segment covering S308–R326 has biased composition (basic residues).

This chain is Latency-related protein 1, found in Human herpesvirus 1 (strain F) (HHV-1).